A 255-amino-acid polypeptide reads, in one-letter code: Triosephosphate isomerase (255 aa).

9 to 11 (NWK) is a substrate binding site. The active-site Electrophile is the His95. Glu167 (proton acceptor) is an active-site residue. Substrate is bound by residues Gly173, Ser212, and 233-234 (GG).

Belongs to the triosephosphate isomerase family. Homodimer.

It is found in the cytoplasm. It carries out the reaction D-glyceraldehyde 3-phosphate = dihydroxyacetone phosphate. It functions in the pathway carbohydrate biosynthesis; gluconeogenesis. The protein operates within carbohydrate degradation; glycolysis; D-glyceraldehyde 3-phosphate from glycerone phosphate: step 1/1. Its function is as follows. Involved in the gluconeogenesis. Catalyzes stereospecifically the conversion of dihydroxyacetone phosphate (DHAP) to D-glyceraldehyde-3-phosphate (G3P). This chain is Triosephosphate isomerase, found in Klebsiella pneumoniae.